The sequence spans 436 residues: MVEVSAEVLAELELLKKENAKLRSQLDSQKSDKLPMSLQEFQRYGRQMIVEETSGIEGQLKLKNSKVLVIGAGGLGCPALLYLAGAGIGTIGIVDNDTVDNSNLHRQVLHDSSKVGMLKCESARQRINLLNPHVNVKTYPVRLDYSNAFTIFENYDYVLDCTDTPITRYLVSDVAVNLGMTVISASGLGSEGQLSILNFKNEGPCYRCFYPTPPPPNSVSSCQEGGVIGPCIGLVGTMMAVETLKVIYDIYTLENFKPFLMMYSGFPNQTLRTFKMRGRQNNCECCGLDPKITRAAIESGLVNYFEFCGSRNYNLCTDEERISSEIYKTEFIDCNEKDHILIDVRPRHHFNISHFNHAINIPVKELKGMKGSLDILKESVPNVSQDSKVIVLCRYGNDSQIATRLLKDEFKINDVKDVKGGFFKYIDEEDHSYPKY.

Residues Gly-74, Asp-95, 102-106, Lys-119, and 163-164 contribute to the ATP site; these read SNLHR and DT. Cys-205 and Cys-208 together coordinate Zn(2+). Cys-222 acts as the Glycyl thioester intermediate; for adenylyltransferase activity in catalysis. Residues Cys-283 and Cys-286 each coordinate Zn(2+). One can recognise a Rhodanese domain in the interval 335–434; sequence NEKDHILIDV…YIDEEDHSYP (100 aa). Cys-393 functions as the Cysteine persulfide intermediate; for sulfurtransferase activity in the catalytic mechanism.

It in the N-terminal section; belongs to the HesA/MoeB/ThiF family. UBA4 subfamily. Requires Zn(2+) as cofactor.

Its subcellular location is the cytoplasm. It localises to the cytosol. It functions in the pathway tRNA modification; 5-methoxycarbonylmethyl-2-thiouridine-tRNA biosynthesis. Its function is as follows. Plays a central role in 2-thiolation of mcm(5)S(2)U at tRNA wobble positions of cytosolic tRNA(Lys), tRNA(Glu) and tRNA(Gln). Acts by mediating the C-terminal thiocarboxylation of sulfur carrier URM1. Its N-terminus first activates URM1 as acyl-adenylate (-COAMP), then the persulfide sulfur on the catalytic cysteine is transferred to URM1 to form thiocarboxylation (-COSH) of its C-terminus. The reaction probably involves hydrogen sulfide that is generated from the persulfide intermediate and that acts as a nucleophile towards URM1. Subsequently, a transient disulfide bond is formed. Does not use thiosulfate as sulfur donor; NFS1 probably acting as a sulfur donor for thiocarboxylation reactions. Prior mcm(5) tRNA modification by the elongator complex is required for 2-thiolation. May also be involved in protein urmylation. In Vanderwaltozyma polyspora (strain ATCC 22028 / DSM 70294 / BCRC 21397 / CBS 2163 / NBRC 10782 / NRRL Y-8283 / UCD 57-17) (Kluyveromyces polysporus), this protein is Adenylyltransferase and sulfurtransferase UBA4.